The sequence spans 460 residues: MSVRFSSASRRLGSCGGAGSVRLSSGGAGFGVGSTGSVPGFGSGFTCAFGGSSSAGSYSGGLGGGSASCTAFTGNEHGLLSGNEKVTMQNLNDRLASYLDNVRALEEANADLEQKIKGWYEKFGPGSCRGLDHDYSRYFTVIDDLRNQIISATTSNANIVLQNDNARLTADDFRLKFENEQALHQSVDADVSSLRRVLDELTLCRTDLEIQLETLSEELAYLKKNHEEEMKALQCAAGGNVNVEMNAAPGVDLTVLLNNMRAEYEALAEQNRRDAEAWFNEKSASLQQQISDDAGATTSARNELTEMKRTLQTLEIELQSLLATKHSLECSLTETEGNYCAQLAQIQAQIGALEEQLHQVRTETEGQKLEYEQLLDIKVHLEKEIETYCRLIDGEDGSCTKSKGYGGPGNQIKDPSKATVVKTIVEEIDPRGKVPSSRVHTVEEKSTKVNNMKSEQRVPS.

The interval Met1 to Asn83 is head. A coil 1A region spans residues Glu84–Trp119. The IF rod domain occupies Glu84–Cys399. Residues Tyr120–Val141 are linker 1. The interval Ile142–Leu233 is coil 1B. Residues Gln234–Leu256 form a linker 12 region. Residues Leu257–Glu395 form a coil 2 region. The segment at Asp396–Ser460 is tail. Residues Asp429–Ser460 form a disordered region. Residues Lys448 to Ser460 show a composition bias toward polar residues.

It belongs to the intermediate filament family. As to quaternary structure, heterotetramer of two type I and two type II keratins. Interacts with KRT6A to form filaments.

Its subcellular location is the cytoplasm. Essential for the proper assembly of type I and type II keratin protein complexes and formation of keratin intermediate filaments in the inner root sheath (irs). The polypeptide is Keratin, type I cytoskeletal 27 (Capra hircus (Goat)).